The chain runs to 171 residues: Small ribosomal subunit protein uS5 (171 aa).

Residues Tyr-15–Ile-78 enclose the S5 DRBM domain.

The protein belongs to the universal ribosomal protein uS5 family. Part of the 30S ribosomal subunit. Contacts proteins S4 and S8.

Functionally, with S4 and S12 plays an important role in translational accuracy. In terms of biological role, located at the back of the 30S subunit body where it stabilizes the conformation of the head with respect to the body. The sequence is that of Small ribosomal subunit protein uS5 from Phytoplasma australiense.